The primary structure comprises 891 residues: DNA polymerase I (891 aa).

The 5'-3' exonuclease domain maps to 1–313 (MEQPVIKEGT…LLDNTPALDN (313 aa)). The 3'-5' exonuclease domain occupies 314-488 (TPKKSCMIVL…RLCEYFEKGG (175 aa)). The tract at residues 492-890 (NLLSLAREIE…FIAKRWNELK (399 aa)) is polymerase.

The protein belongs to the DNA polymerase type-A family. As to quaternary structure, single-chain monomer with multiple functions.

It carries out the reaction DNA(n) + a 2'-deoxyribonucleoside 5'-triphosphate = DNA(n+1) + diphosphate. Functionally, in addition to polymerase activity, this DNA polymerase exhibits 3'-5' and 5'-3' exonuclease activity. The sequence is that of DNA polymerase I (polA) from Helicobacter pylori (strain ATCC 700392 / 26695) (Campylobacter pylori).